Consider the following 343-residue polypeptide: MAYTVEPREHSKNTTLPTVAMPPSPPSSFSASFGPFRYDTKEVNFDHWTSTKEKVVTGPYDYIAAKPGKEVRTLLLACFDEWLQVPPESLEVIGQVVRMLHTASLLIDDIQDNSELRRGKPVAQNIFGTALTINSANYVYFLALEKLNSLKNPNITDIFTEELLRLHRGQAMDLYWRDTLTCPTEEEYFEMVANMTGGLFWLMYRMMNAESSMPIDLLPVVELLGVIFQVLDDYKNLCSREYGKLKGFGEDLTEGKFSFPVIHSIRSNPEDLQLLHVLQQKSSNEHVKLYAIEIMESTGSLEYTKHVVENIVSQIQEIIYSTDEGQGRGKGILDLLHKITRLS.

Residues 1–12 show a composition bias toward basic and acidic residues; it reads MAYTVEPREHSK. Residues 1–26 form a disordered region; it reads MAYTVEPREHSKNTTLPTVAMPPSPP. 3 residues coordinate isopentenyl diphosphate: Lys69, Arg72, and His101. Mg(2+)-binding residues include Asp108 and Asp112. Arg117 contacts dimethylallyl diphosphate. Isopentenyl diphosphate is bound at residue Arg118. Dimethylallyl diphosphate is bound by residues Thr196 and Gln229. Asp232 provides a ligand contact to Mg(2+). 3 residues coordinate dimethylallyl diphosphate: Asn236, Lys246, and Lys256.

Belongs to the FPP/GGPP synthase family. The cofactor is Mg(2+).

The enzyme catalyses isopentenyl diphosphate + dimethylallyl diphosphate = (2E)-geranyl diphosphate + diphosphate. It catalyses the reaction isopentenyl diphosphate + (2E)-geranyl diphosphate = (2E,6E)-farnesyl diphosphate + diphosphate. It carries out the reaction isopentenyl diphosphate + (2E,6E)-farnesyl diphosphate = (2E,6E,10E)-geranylgeranyl diphosphate + diphosphate. It participates in mycotoxin biosynthesis. Geranylgeranyl pyrophosphate synthase; part of the gene cluster that mediates the biosynthesis of aphidicolin, a specific inhibitor of eukaryotic DNA synthesis and DNA polymerase alpha. The geranylgeranyl pyrophosphate synthase GGS is required for supplying a sufficient amount of geranylgeranyl diphosphate (GGDP), the general precursor of diterpenes. The diterpene synthase ACS then catalyzes the conversion of geranylgeranyl diphosphate to aphidicolan-16-beta-ol via the intermediate syn-copalyldiphosphate (syn-CDP). In addition to aphidicolan-16-beta-ol, the enzyme also produces low levels of amphidicol-15-ene and amphidicol-16-ene. The cytochrome P450 monooxygenase P450-2 then catalyzes the two-step hydroxylation from aphidicolan-16-beta-ol to 3-deoxyaphidicolin via a 17,3-deoxyaphidicolin intermediate. Finally, the cytochrome P450 monooxygenase P450-1 converts 3-deoxyaphidicolin to aphidicolin. The chain is Geranylgeranyl pyrophosphate synthase (GGS) from Neocamarosporium betae (Beet black rot fungus).